A 603-amino-acid chain; its full sequence is UvrABC system protein C (603 aa).

The region spanning threonine 17–valine 94 is the GIY-YIG domain. A UVR domain is found at serine 199–isoleucine 234.

It belongs to the UvrC family. As to quaternary structure, interacts with UvrB in an incision complex.

It is found in the cytoplasm. Functionally, the UvrABC repair system catalyzes the recognition and processing of DNA lesions. UvrC both incises the 5' and 3' sides of the lesion. The N-terminal half is responsible for the 3' incision and the C-terminal half is responsible for the 5' incision. This Borrelia garinii subsp. bavariensis (strain ATCC BAA-2496 / DSM 23469 / PBi) (Borreliella bavariensis) protein is UvrABC system protein C.